The primary structure comprises 101 residues: Small ribosomal subunit protein bS18c (101 aa).

This sequence belongs to the bacterial ribosomal protein bS18 family. Part of the 30S ribosomal subunit.

The protein resides in the plastid. It is found in the chloroplast. The chain is Small ribosomal subunit protein bS18c from Lepidium virginicum (Virginia pepperweed).